Consider the following 217-residue polypeptide: Adenylate kinase (217 aa).

10 to 15 serves as a coordination point for ATP; sequence GAGKGT. Positions 30 to 59 are NMP; the sequence is STGDLFRANISQQTELGKLAKSYMNAGNLV. Residues Thr31, Arg36, 57–59, 85–88, and Gln92 each bind AMP; these read NLV and GFPR. Residues 126 to 164 form an LID region; the sequence is GRRVCRNEPKHVFHVTYTPPKKEGVCDVCGGELYQRDDD. ATP is bound by residues Arg127 and 137 to 138; that span reads VF. The AMP site is built by Arg161 and Arg172. Gly200 is an ATP binding site.

The protein belongs to the adenylate kinase family. Monomer.

It localises to the cytoplasm. It catalyses the reaction AMP + ATP = 2 ADP. It functions in the pathway purine metabolism; AMP biosynthesis via salvage pathway; AMP from ADP: step 1/1. Its function is as follows. Catalyzes the reversible transfer of the terminal phosphate group between ATP and AMP. Plays an important role in cellular energy homeostasis and in adenine nucleotide metabolism. The protein is Adenylate kinase of Streptomyces coelicolor (strain ATCC BAA-471 / A3(2) / M145).